The primary structure comprises 108 residues: ATP-dependent Clp protease adapter protein ClpS (108 aa).

Over residues 1–10 (MADSDKHGDE) the composition is skewed to basic and acidic residues. The segment at 1-21 (MADSDKHGDEGPSTGVVVKAK) is disordered.

Belongs to the ClpS family. Binds to the N-terminal domain of the chaperone ClpA.

Functionally, involved in the modulation of the specificity of the ClpAP-mediated ATP-dependent protein degradation. The chain is ATP-dependent Clp protease adapter protein ClpS from Rhodospirillum centenum (strain ATCC 51521 / SW).